The sequence spans 271 residues: Thiosulfate sulfurtransferase (271 aa).

2 Rhodanese domains span residues 21-129 and 159-270; these read SAPE…PLSR and GAAD…TPVE. Cys230 serves as the catalytic Cysteine persulfide intermediate. A substrate-binding site is contributed by Arg235.

The protein localises to the cytoplasm. It catalyses the reaction thiosulfate + hydrogen cyanide = thiocyanate + sulfite + 2 H(+). This is Thiosulfate sulfurtransferase (rhdA) from Azotobacter vinelandii.